Reading from the N-terminus, the 578-residue chain is Putative multidrug export ATP-binding/permease protein SA1683 (578 aa).

The Cytoplasmic portion of the chain corresponds to 1–15 (MIKRYLQFVKPYKYR). A helical membrane pass occupies residues 16-36 (IFATIIVGIIKFGIPMLIPLL). The 291-residue stretch at 16 to 306 (IFATIIVGII…LVASFTTLTQ (291 aa)) folds into the ABC transmembrane type-1 domain. The Extracellular segment spans residues 37-59 (IKYAIDGVINNHALTTDEKVHHL). A helical membrane pass occupies residues 60–80 (TIAIGIALFIFVIVRPPIEFI). Residues 81–138 (RQYLAQWTSNKILYDIRKKLYNHLQALSARFYANNQVGQVISRVINDVEQTKDFILTG) lie on the Cytoplasmic side of the membrane. The helical transmembrane segment at 139-159 (LMNIWLDCITIIIALSIMFFL) threads the bilayer. The Extracellular segment spans residues 160-162 (DVK). Residues 163-183 (LTLAALFIFPFYILTVYVFFG) form a helical membrane-spanning segment. Residues 184 to 244 (RLRKLTRERS…TRALKHTRWN (61 aa)) are Cytoplasmic-facing. Residues 245 to 263 (AYSFAAINTVTDIGPIIVI) traverse the membrane as a helical segment. Residues 264–269 (GVGAYL) are Extracellular-facing. A helical membrane pass occupies residues 270 to 287 (AISGSITVGTLAAFVGYL). Topologically, residues 288-578 (ELLFGPLRRL…YEHLYSIQNL (291 aa)) are cytoplasmic. The region spanning 340-575 (IDIDHVSFQY…QGAYEHLYSI (236 aa)) is the ABC transporter domain. 374-381 (GMSGGGKS) lines the ATP pocket.

Belongs to the ABC transporter superfamily. As to quaternary structure, homodimer.

It is found in the cell membrane. Its function is as follows. May be involved in multidrug export. Transmembrane domains (TMD) form a pore in the cell membrane and the ATP-binding domain (NBD) is responsible for energy generation. The protein is Putative multidrug export ATP-binding/permease protein SA1683 of Staphylococcus aureus (strain N315).